Reading from the N-terminus, the 216-residue chain is Small ribosomal subunit protein uS5 (216 aa).

The segment at 1 to 55 (MDKKLENQKDLLNQDPKVELNSQSVAKNPLNSREVKPIQRRRPLRKNARDKNSKP) is disordered. Positions 20–31 (LNSQSVAKNPLN) are enriched in polar residues. Positions 57 to 120 (FEERVIAIHR…KDAQNRLVSV (64 aa)) constitute an S5 DRBM domain.

Belongs to the universal ribosomal protein uS5 family. As to quaternary structure, part of the 30S ribosomal subunit. Contacts proteins S4 and S8.

Its function is as follows. With S4 and S12 plays an important role in translational accuracy. Located at the back of the 30S subunit body where it stabilizes the conformation of the head with respect to the body. In Mesomycoplasma hyopneumoniae (strain 7448) (Mycoplasma hyopneumoniae), this protein is Small ribosomal subunit protein uS5.